A 626-amino-acid chain; its full sequence is Methanol dehydrogenase [cytochrome c] subunit 1 (626 aa).

Residues Met1 to Ala27 form the signal peptide. Residues Cys130 and Cys131 are joined by a disulfide bond. 2 residues coordinate Ca(2+): Glu204 and Asn288. Asp330 (proton acceptor) is an active-site residue. An intrachain disulfide couples Cys413 to Cys442.

It belongs to the bacterial PQQ dehydrogenase family. Heterotetramer composed of 2 alpha and 2 beta subunits. The cofactor is pyrroloquinoline quinone. It depends on Ca(2+) as a cofactor.

It localises to the cell inner membrane. It catalyses the reaction 2 Fe(III)-[cytochrome cL] + a primary alcohol = 2 Fe(II)-[cytochrome cL] + an aldehyde + 2 H(+). Its function is as follows. Catalyzes the oxidation of primary alcohols including methanol. This Methylobacterium organophilum protein is Methanol dehydrogenase [cytochrome c] subunit 1 (moxF).